The following is a 417-amino-acid chain: Cobalamin binding intrinsic factor (417 aa).

The signal sequence occupies residues 1–18 (MAWFALYLLSLLWATAGT). 3 disulfides stabilise this stretch: C26/C246, C103/C288, and C143/C182. Residue D171 participates in cob(II)alamin binding. At S191 the chain carries Phosphoserine. D222 and Q270 together coordinate cob(II)alamin. N311, N330, and N334 each carry an N-linked (GlcNAc...) asparagine glycan. Residues 365–370 (SWGLVV) and 386–395 (WQFLSGVTPL) contribute to the cob(II)alamin site. A glycan (N-linked (GlcNAc...) asparagine) is linked at N413.

Belongs to the eukaryotic cobalamin transport proteins family. Interacts with CUBN (via CUB domains). In terms of tissue distribution, gastric mucosa.

The protein resides in the secreted. Functionally, promotes absorption of the essential vitamin cobalamin (Cbl) in the ileum. After interaction with CUBN, the CBLIF-cobalamin complex is internalized via receptor-mediated endocytosis. This is Cobalamin binding intrinsic factor from Homo sapiens (Human).